Here is a 473-residue protein sequence, read N- to C-terminus: G2/mitotic-specific cyclin-1 (473 aa).

The segment covering 1–12 (MGSRNIVQQQNR) has biased composition (polar residues). 2 disordered regions span residues 1-23 (MGSR…AMKQ) and 134-155 (KEKP…APTL). Over residues 134-147 (KEKPIEKEKAAEKS) the composition is skewed to basic and acidic residues.

It belongs to the cyclin family. Cyclin AB subfamily. In terms of assembly, interacts with the CDC2 and CDK2 protein kinases to form a serine/threonine kinase holoenzyme complex. The cyclin subunit imparts substrate specificity to the complex.

Essential for the control of the cell cycle at the G2/M (mitosis) transition. G2/M cyclins accumulate steadily during G2 and are abruptly destroyed at mitosis. In Antirrhinum majus (Garden snapdragon), this protein is G2/mitotic-specific cyclin-1.